We begin with the raw amino-acid sequence, 324 residues long: 26S proteasome non-ATPase regulatory subunit 7 (324 aa).

The MPN domain occupies 9 to 144 (VVVHPLVLLS…TEAYISVEEV (136 aa)). Residue lysine 180 forms a Glycyl lysine isopeptide (Lys-Gly) (interchain with G-Cter in ubiquitin) linkage. Lysine 204, lysine 214, lysine 316, and lysine 317 each carry N6-acetyllysine. A disordered region spans residues 281-324 (ANRDAEKKEGQEKEESKKDRKEDKEKDKDKEKSDVKKEEKKEKK).

The protein belongs to the peptidase M67A family. As to quaternary structure, component of the 19S proteasome regulatory particle complex. The 26S proteasome consists of a 20S core particle (CP) and two 19S regulatory subunits (RP). The regulatory particle is made of a lid composed of 9 subunits including PSMD7, a base containing 6 ATPases and few additional components. Within the complex, PSMD7 interacts with subunit PSMD4 through their respective MPN domain. Interacts with TRIM5.

In terms of biological role, component of the 26S proteasome, a multiprotein complex involved in the ATP-dependent degradation of ubiquitinated proteins. This complex plays a key role in the maintenance of protein homeostasis by removing misfolded or damaged proteins, which could impair cellular functions, and by removing proteins whose functions are no longer required. Therefore, the proteasome participates in numerous cellular processes, including cell cycle progression, apoptosis, or DNA damage repair. This is 26S proteasome non-ATPase regulatory subunit 7 (PSMD7) from Homo sapiens (Human).